Consider the following 163-residue polypeptide: Urease accessory protein UreE (163 aa).

A disordered region spans residues 144–163; sequence QPEPGAYGGSSAGSHDGHHH.

It belongs to the UreE family.

The protein resides in the cytoplasm. Involved in urease metallocenter assembly. Binds nickel. Probably functions as a nickel donor during metallocenter assembly. The chain is Urease accessory protein UreE from Aliivibrio fischeri (strain ATCC 700601 / ES114) (Vibrio fischeri).